The sequence spans 194 residues: MTEEAATSKILLFNKWDMSEVVVKDAGMVRYVTITSTEVPSSCGRLTQQQFTKSEMAIVERLINRLMQQEYNTGKKMMCTKMVMDAFDVINKKTKQNPLQVLVDAVANAGPREETVRLKYGGINVPKSVDSAPIRRVNTALRYIALATWKGSHKTKKPAYLVLADELIMAAKGDAKCFSVGKKEEVERIAKSAR.

Belongs to the universal ribosomal protein uS7 family. In terms of assembly, part of the 30S ribosomal subunit.

Its function is as follows. One of the primary rRNA binding proteins, it binds directly to 16S rRNA where it nucleates assembly of the head domain of the 30S subunit. Is located at the subunit interface close to the decoding center. This Methanocorpusculum labreanum (strain ATCC 43576 / DSM 4855 / Z) protein is Small ribosomal subunit protein uS7.